The sequence spans 461 residues: tRNA(Ile)-lysidine synthase (461 aa).

Ser26–Ser31 contacts ATP.

This sequence belongs to the tRNA(Ile)-lysidine synthase family.

It localises to the cytoplasm. The catalysed reaction is cytidine(34) in tRNA(Ile2) + L-lysine + ATP = lysidine(34) in tRNA(Ile2) + AMP + diphosphate + H(+). Its function is as follows. Ligates lysine onto the cytidine present at position 34 of the AUA codon-specific tRNA(Ile) that contains the anticodon CAU, in an ATP-dependent manner. Cytidine is converted to lysidine, thus changing the amino acid specificity of the tRNA from methionine to isoleucine. This chain is tRNA(Ile)-lysidine synthase, found in Clostridium acetobutylicum (strain ATCC 824 / DSM 792 / JCM 1419 / IAM 19013 / LMG 5710 / NBRC 13948 / NRRL B-527 / VKM B-1787 / 2291 / W).